Here is a 117-residue protein sequence, read N- to C-terminus: S-adenosylmethionine decarboxylase proenzyme (117 aa).

The Schiff-base intermediate with substrate; via pyruvic acid role is filled by Ser-63. Pyruvic acid (Ser); by autocatalysis is present on Ser-63. His-68 functions as the Proton acceptor; for processing activity in the catalytic mechanism. The active-site Proton donor; for catalytic activity is the Cys-83.

It belongs to the prokaryotic AdoMetDC family. Type 1 subfamily. In terms of assembly, heterotetramer of two alpha and two beta chains arranged as a dimer of alpha/beta heterodimers. The cofactor is pyruvate. In terms of processing, is synthesized initially as an inactive proenzyme. Formation of the active enzyme involves a self-maturation process in which the active site pyruvoyl group is generated from an internal serine residue via an autocatalytic post-translational modification. Two non-identical subunits are generated from the proenzyme in this reaction, and the pyruvate is formed at the N-terminus of the alpha chain, which is derived from the carboxyl end of the proenzyme. The post-translation cleavage follows an unusual pathway, termed non-hydrolytic serinolysis, in which the side chain hydroxyl group of the serine supplies its oxygen atom to form the C-terminus of the beta chain, while the remainder of the serine residue undergoes an oxidative deamination to produce ammonia and the pyruvoyl group blocking the N-terminus of the alpha chain.

It catalyses the reaction S-adenosyl-L-methionine + H(+) = S-adenosyl 3-(methylsulfanyl)propylamine + CO2. Its pathway is amine and polyamine biosynthesis; S-adenosylmethioninamine biosynthesis; S-adenosylmethioninamine from S-adenosyl-L-methionine: step 1/1. Its function is as follows. Catalyzes the decarboxylation of S-adenosylmethionine to S-adenosylmethioninamine (dcAdoMet), the propylamine donor required for the synthesis of the polyamines spermine and spermidine from the diamine putrescine. This chain is S-adenosylmethionine decarboxylase proenzyme, found in Methanococcus aeolicus (strain ATCC BAA-1280 / DSM 17508 / OCM 812 / Nankai-3).